A 168-amino-acid chain; its full sequence is Photosystem I assembly protein Ycf3 (168 aa).

TPR repeat units follow at residues 35–68 (AFTY…EIDP), 72–105 (SYIL…NPFL), and 120–153 (GEQA…TPGN).

It belongs to the Ycf3 family.

Its subcellular location is the plastid. The protein resides in the chloroplast thylakoid membrane. Essential for the assembly of the photosystem I (PSI) complex. May act as a chaperone-like factor to guide the assembly of the PSI subunits. This is Photosystem I assembly protein Ycf3 from Ipomoea purpurea (Common morning glory).